Reading from the N-terminus, the 686-residue chain is Methionine--tRNA ligase (686 aa).

Positions 15–25 (PYTNGPIHIGH) match the 'HIGH' region motif. C147, C150, C160, and C163 together coordinate Zn(2+). The short motif at 336-340 (KLSTS) is the 'KMSKS' region element. T339 lines the ATP pocket. Residues 584-686 (DFAKMDLRVG…AGVGNGEGIN (103 aa)) enclose the tRNA-binding domain.

It belongs to the class-I aminoacyl-tRNA synthetase family. MetG type 1 subfamily. Homodimer. The cofactor is Zn(2+).

Its subcellular location is the cytoplasm. It carries out the reaction tRNA(Met) + L-methionine + ATP = L-methionyl-tRNA(Met) + AMP + diphosphate. Is required not only for elongation of protein synthesis but also for the initiation of all mRNA translation through initiator tRNA(fMet) aminoacylation. The chain is Methionine--tRNA ligase from Flavobacterium psychrophilum (strain ATCC 49511 / DSM 21280 / CIP 103535 / JIP02/86).